Consider the following 194-residue polypeptide: Segregation and condensation protein B (194 aa).

This sequence belongs to the ScpB family. In terms of assembly, homodimer. Homodimerization may be required to stabilize the binding of ScpA to the Smc head domains. Component of a cohesin-like complex composed of ScpA, ScpB and the Smc homodimer, in which ScpA and ScpB bind to the head domain of Smc. The presence of the three proteins is required for the association of the complex with DNA.

Its subcellular location is the cytoplasm. Its function is as follows. Participates in chromosomal partition during cell division. May act via the formation of a condensin-like complex containing Smc and ScpA that pull DNA away from mid-cell into both cell halves. This Brevibacillus brevis (strain 47 / JCM 6285 / NBRC 100599) protein is Segregation and condensation protein B.